The sequence spans 304 residues: Probable 5-dehydro-4-deoxyglucarate dehydratase (304 aa).

Belongs to the DapA family.

The enzyme catalyses 5-dehydro-4-deoxy-D-glucarate + H(+) = 2,5-dioxopentanoate + CO2 + H2O. The protein operates within carbohydrate acid metabolism; D-glucarate degradation; 2,5-dioxopentanoate from D-glucarate: step 2/2. This is Probable 5-dehydro-4-deoxyglucarate dehydratase from Arthrobacter sp. (strain FB24).